Here is a 239-residue protein sequence, read N- to C-terminus: 6-phosphogluconolactonase (239 aa).

The protein belongs to the glucosamine/galactosamine-6-phosphate isomerase family. 6-phosphogluconolactonase subfamily.

The catalysed reaction is 6-phospho-D-glucono-1,5-lactone + H2O = 6-phospho-D-gluconate + H(+). It functions in the pathway carbohydrate degradation; pentose phosphate pathway; D-ribulose 5-phosphate from D-glucose 6-phosphate (oxidative stage): step 2/3. Hydrolysis of 6-phosphogluconolactone to 6-phosphogluconate. This Xylella fastidiosa (strain 9a5c) protein is 6-phosphogluconolactonase (pgl).